The chain runs to 386 residues: Phosphoglycerate kinase (386 aa).

Substrate-binding positions include D21–N23, R36, H59–R62, R113, and R146. ATP is bound by residues K197, E313, and G339–T342.

Belongs to the phosphoglycerate kinase family. As to quaternary structure, monomer.

It localises to the cytoplasm. The enzyme catalyses (2R)-3-phosphoglycerate + ATP = (2R)-3-phospho-glyceroyl phosphate + ADP. The protein operates within carbohydrate degradation; glycolysis; pyruvate from D-glyceraldehyde 3-phosphate: step 2/5. The protein is Phosphoglycerate kinase of Serratia proteamaculans (strain 568).